The sequence spans 127 residues: uncharacterized protein (127 aa).

A signal peptide spans 1-23 (MAGVRARAPLPLALLLSLPAAPG). The interval 43–127 (CFEVGLRKPP…ACPPRAPLWR (85 aa)) is disordered. Residues 59–70 (PPSFSSGSSRPL) show a composition bias toward low complexity.

The protein localises to the secreted. This is an uncharacterized protein from Homo sapiens (Human).